We begin with the raw amino-acid sequence, 356 residues long: Biotin synthase (356 aa).

The Radical SAM core domain maps to 54-278; the sequence is GEVQLCTLLS…VAVARITMPL (225 aa). C69, C73, and C76 together coordinate [4Fe-4S] cluster. 4 residues coordinate [2Fe-2S] cluster: C113, C144, C204, and R282.

This sequence belongs to the radical SAM superfamily. Biotin synthase family. In terms of assembly, homodimer. [4Fe-4S] cluster serves as cofactor. It depends on [2Fe-2S] cluster as a cofactor.

It catalyses the reaction (4R,5S)-dethiobiotin + (sulfur carrier)-SH + 2 reduced [2Fe-2S]-[ferredoxin] + 2 S-adenosyl-L-methionine = (sulfur carrier)-H + biotin + 2 5'-deoxyadenosine + 2 L-methionine + 2 oxidized [2Fe-2S]-[ferredoxin]. It functions in the pathway cofactor biosynthesis; biotin biosynthesis; biotin from 7,8-diaminononanoate: step 2/2. Catalyzes the conversion of dethiobiotin (DTB) to biotin by the insertion of a sulfur atom into dethiobiotin via a radical-based mechanism. The polypeptide is Biotin synthase (Novosphingobium aromaticivorans (strain ATCC 700278 / DSM 12444 / CCUG 56034 / CIP 105152 / NBRC 16084 / F199)).